The following is a 971-amino-acid chain: Translation initiation factor IF-2 (971 aa).

A compositionally biased stretch (basic and acidic residues) spans 48 to 63 (DHLRKSHGATDGDKRK). 2 disordered regions span residues 48–86 (DHLR…ARTI) and 101–381 (DVAE…STFQ). Residues 105–114 (GADQGQAQVA) are compositionally biased toward low complexity. Over residues 121–181 (ELKRREEEAR…EEEAATKRAA (61 aa)) the composition is skewed to basic and acidic residues. Over residues 182 to 203 (AEAAAAQQQAAAQQAAAEQEAT) the composition is skewed to low complexity. The span at 210–261 (DEARAAAERAAQREAAKKAEDAAREAADKARAEQEEISKRRAAAEAEARAIR) shows a compositional bias: basic and acidic residues. The span at 277-286 (PPKPVEPPKP) shows a compositional bias: pro residues. A compositionally biased stretch (low complexity) spans 304–326 (ARPAVKKPAGAAAPATTQAPAGA). Residues 356–369 (SSGGVDRGWRGGPK) show a composition bias toward gly residues. The tr-type G domain occupies 471–640 (PRPPVVTVMG…LLQAEVLELK (170 aa)). Residues 480-487 (GHVDHGKT) form a G1 region. 480-487 (GHVDHGKT) contributes to the GTP binding site. Residues 505–509 (GITQH) are G2. A G3 region spans residues 526 to 529 (DTPG). GTP-binding positions include 526 to 530 (DTPGH) and 580 to 583 (NKID). A G4 region spans residues 580 to 583 (NKID). Positions 616-618 (SAK) are G5.

Belongs to the TRAFAC class translation factor GTPase superfamily. Classic translation factor GTPase family. IF-2 subfamily.

The protein localises to the cytoplasm. In terms of biological role, one of the essential components for the initiation of protein synthesis. Protects formylmethionyl-tRNA from spontaneous hydrolysis and promotes its binding to the 30S ribosomal subunits. Also involved in the hydrolysis of GTP during the formation of the 70S ribosomal complex. This Burkholderia orbicola (strain MC0-3) protein is Translation initiation factor IF-2.